Here is a 205-residue protein sequence, read N- to C-terminus: Anaerobic dimethyl sulfoxide reductase chain B (205 aa).

4Fe-4S ferredoxin-type domains are found at residues 4 to 32, 57 to 89, and 90 to 119; these read YGFYFDSERCTGCKTCELACKDYKDLGTE, NIFAYYMSISCNHCADPACTKVCPTGAMHKNAD, and GFVIVNEEICIGCRYCHMACPYDAPQYDAQ. [4Fe-4S] cluster-binding residues include C13, C16, C19, C23, C67, C70, C75, C79, C99, C102, C105, C109, C126, C129, C141, and C145.

Heterotrimeric enzyme composed of a catalytic heterodimer (DmsAB) and a membrane anchor protein (DmsC). Requires [4Fe-4S] cluster as cofactor.

Functionally, electron transfer subunit of the terminal reductase during anaerobic growth on various sulfoxide and N-oxide compounds. This Haemophilus influenzae (strain ATCC 51907 / DSM 11121 / KW20 / Rd) protein is Anaerobic dimethyl sulfoxide reductase chain B (dmsB).